A 560-amino-acid chain; its full sequence is Formate--tetrahydrofolate ligase (560 aa).

69-76 (TPAGEGKS) serves as a coordination point for ATP.

It belongs to the formate--tetrahydrofolate ligase family.

The enzyme catalyses (6S)-5,6,7,8-tetrahydrofolate + formate + ATP = (6R)-10-formyltetrahydrofolate + ADP + phosphate. Its pathway is one-carbon metabolism; tetrahydrofolate interconversion. The polypeptide is Formate--tetrahydrofolate ligase (Listeria innocua serovar 6a (strain ATCC BAA-680 / CLIP 11262)).